Here is a 126-residue protein sequence, read N- to C-terminus: Fluoride-specific ion channel FluC (126 aa).

Helical transmembrane passes span 35-55, 71-91, and 101-121; these read WWTLSVNIVGSLAMGLLIGLL, VGMLGGFTTFSSFSMEFWLLF, and LYVVASVVGALLACGAGMILI. Na(+) contacts are provided by glycine 75 and threonine 78.

It belongs to the fluoride channel Fluc/FEX (TC 1.A.43) family.

It localises to the cell inner membrane. The catalysed reaction is fluoride(in) = fluoride(out). With respect to regulation, na(+) is not transported, but it plays an essential structural role and its presence is essential for fluoride channel function. Functionally, fluoride-specific ion channel. Important for reducing fluoride concentration in the cell, thus reducing its toxicity. This is Fluoride-specific ion channel FluC from Sphingopyxis alaskensis (strain DSM 13593 / LMG 18877 / RB2256) (Sphingomonas alaskensis).